Consider the following 98-residue polypeptide: Large ribosomal subunit protein uL23 (98 aa).

The protein belongs to the universal ribosomal protein uL23 family. As to quaternary structure, part of the 50S ribosomal subunit. Contacts protein L29, and trigger factor when it is bound to the ribosome.

Functionally, one of the early assembly proteins it binds 23S rRNA. One of the proteins that surrounds the polypeptide exit tunnel on the outside of the ribosome. Forms the main docking site for trigger factor binding to the ribosome. The chain is Large ribosomal subunit protein uL23 from Hydrogenovibrio crunogenus (strain DSM 25203 / XCL-2) (Thiomicrospira crunogena).